A 167-amino-acid chain; its full sequence is MSYSHSIKDCQEPDTVYYDILIPFKPNDQGFSPAIFQAQLTQPIVHNPSEYFLSVVRFSIPTQNIPLTIPQIQPYPNTNVNNTIYSVSIGYNGTYSSQNFVQFDPSLTSPNIPAPNAPTVTSPNVEVTPYYYIYDYSTFLQMINTALENAFNEISAPVGADAPFFFL.

This is an uncharacterized protein from Acanthamoeba polyphaga (Amoeba).